The primary structure comprises 158 residues: Glutamyl-tRNA(Gln) amidotransferase subunit C, mitochondrial (158 aa).

It belongs to the GatC family. As to quaternary structure, subunit of the heterotrimeric GatCAB amidotransferase (AdT) complex, composed of A, B and C subunits.

It is found in the mitochondrion. The catalysed reaction is L-glutamyl-tRNA(Gln) + L-glutamine + ATP + H2O = L-glutaminyl-tRNA(Gln) + L-glutamate + ADP + phosphate + H(+). In terms of biological role, allows the formation of correctly charged Gln-tRNA(Gln) through the transamidation of misacylated Glu-tRNA(Gln) in the mitochondria. The reaction takes place in the presence of glutamine and ATP through an activated gamma-phospho-Glu-tRNA(Gln). This Drosophila grimshawi (Hawaiian fruit fly) protein is Glutamyl-tRNA(Gln) amidotransferase subunit C, mitochondrial.